Here is a 335-residue protein sequence, read N- to C-terminus: Phosphate acyltransferase (335 aa).

Belongs to the PlsX family. As to quaternary structure, homodimer. Probably interacts with PlsY.

The protein resides in the cytoplasm. It catalyses the reaction a fatty acyl-[ACP] + phosphate = an acyl phosphate + holo-[ACP]. The protein operates within lipid metabolism; phospholipid metabolism. Functionally, catalyzes the reversible formation of acyl-phosphate (acyl-PO(4)) from acyl-[acyl-carrier-protein] (acyl-ACP). This enzyme utilizes acyl-ACP as fatty acyl donor, but not acyl-CoA. This chain is Phosphate acyltransferase, found in Streptococcus equi subsp. zooepidemicus (strain MGCS10565).